Here is a 465-residue protein sequence, read N- to C-terminus: Ubiquitin carboxyl-terminal hydrolase UCH54 (465 aa).

A UCH catalytic domain is found at 11 to 333 (EWCLIESNPC…VRFNIIAVMK (323 aa)). Cys145 functions as the Nucleophile in the catalytic mechanism. His220 (proton donor) is an active-site residue. Residues 244 to 293 (INADEQNKPNPNNNNNNKDNDNDNNNNNNNNNNNNNNNNNNNNNNNNNNI) are disordered. Residues 251-292 (KPNPNNNNNNKDNDNDNNNNNNNNNNNNNNNNNNNNNNNNNN) are compositionally biased toward low complexity. Residues 432–460 (NFYPFIMSSLNLMAKHKLLKDAYQKEKLK) enclose the ULD domain.

The protein belongs to the peptidase C12 family.

It catalyses the reaction Thiol-dependent hydrolysis of ester, thioester, amide, peptide and isopeptide bonds formed by the C-terminal Gly of ubiquitin (a 76-residue protein attached to proteins as an intracellular targeting signal).. In terms of biological role, thiol protease that recognizes and hydrolyzes a peptide bond at the C-terminal glycine of either ubiquitin or NEDD8. This Plasmodium falciparum (isolate 3D7) protein is Ubiquitin carboxyl-terminal hydrolase UCH54.